The primary structure comprises 111 residues: Ribonuclease P protein component (111 aa).

This sequence belongs to the RnpA family. In terms of assembly, consists of a catalytic RNA component (M1 or rnpB) and a protein subunit.

It catalyses the reaction Endonucleolytic cleavage of RNA, removing 5'-extranucleotides from tRNA precursor.. Functionally, RNaseP catalyzes the removal of the 5'-leader sequence from pre-tRNA to produce the mature 5'-terminus. It can also cleave other RNA substrates such as 4.5S RNA. The protein component plays an auxiliary but essential role in vivo by binding to the 5'-leader sequence and broadening the substrate specificity of the ribozyme. This Borreliella afzelii (strain PKo) (Borrelia afzelii) protein is Ribonuclease P protein component.